The sequence spans 290 residues: Lipoyl synthase (290 aa).

Cys-44, Cys-49, Cys-55, Cys-70, Cys-74, Cys-77, and Ser-282 together coordinate [4Fe-4S] cluster. The 216-residue stretch at 56-271 (WGEGTATFMI…ELLGKEMGFR (216 aa)) folds into the Radical SAM core domain.

This sequence belongs to the radical SAM superfamily. Lipoyl synthase family. The cofactor is [4Fe-4S] cluster.

The protein resides in the cytoplasm. The catalysed reaction is [[Fe-S] cluster scaffold protein carrying a second [4Fe-4S](2+) cluster] + N(6)-octanoyl-L-lysyl-[protein] + 2 oxidized [2Fe-2S]-[ferredoxin] + 2 S-adenosyl-L-methionine + 4 H(+) = [[Fe-S] cluster scaffold protein] + N(6)-[(R)-dihydrolipoyl]-L-lysyl-[protein] + 4 Fe(3+) + 2 hydrogen sulfide + 2 5'-deoxyadenosine + 2 L-methionine + 2 reduced [2Fe-2S]-[ferredoxin]. It functions in the pathway protein modification; protein lipoylation via endogenous pathway; protein N(6)-(lipoyl)lysine from octanoyl-[acyl-carrier-protein]: step 2/2. Functionally, catalyzes the radical-mediated insertion of two sulfur atoms into the C-6 and C-8 positions of the octanoyl moiety bound to the lipoyl domains of lipoate-dependent enzymes, thereby converting the octanoylated domains into lipoylated derivatives. This chain is Lipoyl synthase, found in Flavobacterium psychrophilum (strain ATCC 49511 / DSM 21280 / CIP 103535 / JIP02/86).